Reading from the N-terminus, the 223-residue chain is Ribonuclease T (223 aa).

The region spanning 20–194 is the Exonuclease domain; sequence VVIDVETAGF…YDTERTAELF (175 aa). The Mg(2+) site is built by aspartate 23, glutamate 25, histidine 181, and aspartate 186. Histidine 181 serves as the catalytic Proton donor/acceptor.

It belongs to the RNase T family. Homodimer. Requires Mg(2+) as cofactor.

In terms of biological role, trims short 3' overhangs of a variety of RNA species, leaving a one or two nucleotide 3' overhang. Responsible for the end-turnover of tRNA: specifically removes the terminal AMP residue from uncharged tRNA (tRNA-C-C-A). Also appears to be involved in tRNA biosynthesis. This Shewanella baltica (strain OS155 / ATCC BAA-1091) protein is Ribonuclease T.